A 254-amino-acid chain; its full sequence is 3-beta-hydroxysteroid dehydrogenase (254 aa).

NAD(+) is bound by residues 12-40 (VTGG…SDIN) and Asp61. Residue Ser139 participates in substrate binding. The active-site Proton acceptor is the Tyr152. Lys156 contacts NAD(+).

Belongs to the short-chain dehydrogenases/reductases (SDR) family. Homotetramer.

The catalysed reaction is testosterone + NAD(+) = androst-4-ene-3,17-dione + NADH + H(+). The enzyme catalyses testosterone + NADP(+) = androst-4-ene-3,17-dione + NADPH + H(+). This is 3-beta-hydroxysteroid dehydrogenase from Comamonas testosteroni (Pseudomonas testosteroni).